A 487-amino-acid chain; its full sequence is MTLLHQLTLSDAREALMRGEITSVELTDALLARIAAVEPQVRAFLTIDAEGARAQAQAADARRAAGDTSPLLGIPLGIKDVISTQGVRTTCASKMLENYVPVYDATAVARLKAAGAVLIGKLNCDEFAMGSSTENSAFQQTRNPWNLERVPGGSSGGSAAAVAAGEAPATLGTDTGGSIRQPAALCGITGLKPTYGRVSRYGLVAFASSLDQIGPMARTVRDCAIILRVIAGADPFDATCTDHPVPDYEAALTGDIRGLRIGVPREYFVAGMQPEVESAVRVAIDVLRDQGAEVREISLPHTPYALPVYYLIAPAEASANLARFDGVRYGLRVPGESYFDELERTRGAGFGPEVRRRIMLGTYALSAGYYDAYYKRAQQVRTLIRRDYQQAFEQVDVIAAPTTPTVAFPIGAHSDDPLAMYLEDVCTLPLNLAGLPGLVVPCGFAAGLPIGLQLIGRAFDEETLLRIGDAYQRVTDWHTRMPDLPVE.

Active-site charge relay system residues include lysine 79 and serine 154. The active-site Acyl-ester intermediate is the serine 178.

This sequence belongs to the amidase family. GatA subfamily. In terms of assembly, heterotrimer of A, B and C subunits.

The enzyme catalyses L-glutamyl-tRNA(Gln) + L-glutamine + ATP + H2O = L-glutaminyl-tRNA(Gln) + L-glutamate + ADP + phosphate + H(+). In terms of biological role, allows the formation of correctly charged Gln-tRNA(Gln) through the transamidation of misacylated Glu-tRNA(Gln) in organisms which lack glutaminyl-tRNA synthetase. The reaction takes place in the presence of glutamine and ATP through an activated gamma-phospho-Glu-tRNA(Gln). In Roseiflexus sp. (strain RS-1), this protein is Glutamyl-tRNA(Gln) amidotransferase subunit A.